A 455-amino-acid chain; its full sequence is Phosphoglucosamine/phosphogalactosamine mutase (455 aa).

Residue Ser97 is the Phosphoserine intermediate of the active site. Residues Ser97, Asp241, Asp243, and Asp245 each contribute to the Mg(2+) site. The residue at position 97 (Ser97) is a Phosphoserine.

The protein belongs to the phosphohexose mutase family. Mg(2+) is required as a cofactor. In terms of processing, activated by phosphorylation.

The enzyme catalyses alpha-D-glucosamine 1-phosphate = D-glucosamine 6-phosphate. It catalyses the reaction D-galactosamine 6-phosphate = alpha-D-galactosamine 1-phosphate. In terms of biological role, involved in the synthesis of UDP-N-acetylglucosamine (UDP-GlcNAc) and UDP-N-acetylgalactosamine (UDP-GalNAc). Catalyzes the conversion of glucosamine-6-phosphate to glucosamine-1-phosphate and of galactosamine-6-phosphate to galactosamine-1-phosphate. The sequence is that of Phosphoglucosamine/phosphogalactosamine mutase from Sulfurisphaera tokodaii (strain DSM 16993 / JCM 10545 / NBRC 100140 / 7) (Sulfolobus tokodaii).